The primary structure comprises 257 residues: uncharacterized protein (257 aa).

A helical membrane pass occupies residues 6–26 (IFWLNLAAIIIISIVVSGGMF).

It belongs to the staphylococcal tandem lipoprotein family.

The protein localises to the cell membrane. This is an uncharacterized protein from Staphylococcus aureus (strain Mu50 / ATCC 700699).